The sequence spans 266 residues: Cyclin-C (266 aa).

The 105-residue stretch at 47-151 (IIQVLGEQLK…LLENLDCCLI (105 aa)) folds into the Cyclin N-terminal domain.

This sequence belongs to the cyclin family. Cyclin C subfamily. In terms of assembly, component of the Cdk8 module of the Mediator complex.

The protein resides in the nucleus. Functionally, component of the Mediator complex, a coactivator involved in regulated gene transcription of nearly all RNA polymerase II-dependent genes. Mediator functions as a bridge to convey information from gene-specific regulatory proteins to the basal RNA polymerase II transcription machinery. Mediator is recruited to promoters by direct interactions with regulatory proteins and serves as a scaffold for the assembly of a functional preinitiation complex with RNA polymerase II and the general transcription factors. Binds to and activates cyclin-dependent kinase Cdk8 that phosphorylates the CTD (C-terminal domain) of the large subunit of RNA polymerase II (RNAp II), which may inhibit the formation of a transcription initiation complex. The chain is Cyclin-C (CycC) from Anopheles gambiae (African malaria mosquito).